We begin with the raw amino-acid sequence, 160 residues long: Major strawberry allergen Fra a 1.04 (160 aa).

This sequence belongs to the BetVI family. In terms of processing, phosphorylated in vivo. Phosphorylation prevents its activity as ribonuclease. Highly expressed in roots. Expressed a low levels in ripe red fruits.

Possesses ribonuclease activity in vitro. This is Major strawberry allergen Fra a 1.04 from Fragaria ananassa (Strawberry).